A 360-amino-acid polypeptide reads, in one-letter code: Peptide chain release factor 1 (360 aa).

Position 235 is an N5-methylglutamine (Q235). Positions 291–308 are enriched in basic and acidic residues; sequence ASERRNLLGTGDRSDRNR. The tract at residues 291 to 312 is disordered; sequence ASERRNLLGTGDRSDRNRTYNF.

The protein belongs to the prokaryotic/mitochondrial release factor family. In terms of processing, methylated by PrmC. Methylation increases the termination efficiency of RF1.

The protein resides in the cytoplasm. Functionally, peptide chain release factor 1 directs the termination of translation in response to the peptide chain termination codons UAG and UAA. The chain is Peptide chain release factor 1 from Yersinia pseudotuberculosis serotype O:1b (strain IP 31758).